A 928-amino-acid chain; its full sequence is DNA-binding protein RFX6 (928 aa).

Disordered stretches follow at residues 1–20 (MAKVPELEDTFLQAQPAPQL) and 50–98 (EGQP…SKTK). Residues 124 to 199 (TLQWLEENYI…YHYYGIGIKE (76 aa)) constitute a DNA-binding region (RFX-type winged-helix).

It belongs to the RFX family. As to quaternary structure, interacts with RFX3. Expressed in pancreas. Expressed in pancreatic beta-cells (insulin-positive cells) and alpha-cells (glucagon-positive cells) (at protein level). Specifically expressed in pancreas, small intestine and colon. Expressed in endocrine cells in the islets.

Its subcellular location is the nucleus. Its function is as follows. Transcription factor required to direct islet cell differentiation during endocrine pancreas development. Specifically required for the differentiation of 4 of the 5 islet cell types and for the production of insulin. Not required for pancreatic PP (polypeptide-producing) cells differentiation. Acts downstream of NEUROG3 and regulates the transcription factors involved in beta-cell maturation and function, thereby restricting the expression of the beta-cell differentiation and specification genes, and thus the beta-cell fate choice. Activates transcription by forming a heterodimer with RFX3 and binding to the X-box in the promoter of target genes. Involved in glucose-stimulated insulin secretion by promoting insulin and L-type calcium channel gene transcription. In Homo sapiens (Human), this protein is DNA-binding protein RFX6 (RFX6).